Here is a 355-residue protein sequence, read N- to C-terminus: (3aS,4S,5R,7aS)-5-hydroxy-7a-methyl-1-oxo-octahydro-1H-indene-4-carboxyl-CoA dehydrogenase (355 aa).

FMN contacts are provided by residues 21-23 (GMG), 173-175 (AGG), and 196-197 (GT).

The protein belongs to the nitronate monooxygenase family.

It carries out the reaction (3aS,4S,5R,7aS)-5-hydroxy-7a-methyl-1-oxo-octahydro-1H-indene-4-carboxyl-CoA + NAD(+) = (5R,7aS)-5-hydroxy-7a-methyl-1-oxo-2,3,5,6,7,7a-hexahydro-1H-indene-carboxyl-CoA + NADH + H(+). It functions in the pathway steroid metabolism; cholesterol degradation. Requires the presence of IpdF. Functionally, involved in the final steps of cholesterol and steroid degradation. Probably catalyzes the introduction of a double bound into the C ring of 5OH-HIC-CoA, leading to the formation of (5R,7aS)-5-hydroxy-7a-methyl-1-oxo-3,5,6,7-tetrahydro-2H-indene-4-carboxyl-CoA. In Mycobacterium tuberculosis (strain ATCC 25618 / H37Rv), this protein is (3aS,4S,5R,7aS)-5-hydroxy-7a-methyl-1-oxo-octahydro-1H-indene-4-carboxyl-CoA dehydrogenase.